The primary structure comprises 156 residues: Ribosomal RNA large subunit methyltransferase H (156 aa).

S-adenosyl-L-methionine-binding positions include leucine 73, glycine 104, and 123–128 (LSSLTL).

It belongs to the RNA methyltransferase RlmH family. As to quaternary structure, homodimer.

It localises to the cytoplasm. It catalyses the reaction pseudouridine(1915) in 23S rRNA + S-adenosyl-L-methionine = N(3)-methylpseudouridine(1915) in 23S rRNA + S-adenosyl-L-homocysteine + H(+). Its function is as follows. Specifically methylates the pseudouridine at position 1915 (m3Psi1915) in 23S rRNA. The polypeptide is Ribosomal RNA large subunit methyltransferase H (Neisseria meningitidis serogroup A / serotype 4A (strain DSM 15465 / Z2491)).